A 474-amino-acid chain; its full sequence is Replication factor C large subunit (474 aa).

45–52 (GPPGCGKT) provides a ligand contact to ATP. Positions 415-468 (DKKTNNKKGKENKTKNTTKKIKEIKETPKKEEVKEPKKQIEKQKSEKKEPKKQM) are enriched in basic and acidic residues. The tract at residues 415-474 (DKKTNNKKGKENKTKNTTKKIKEIKETPKKEEVKEPKKQIEKQKSEKKEPKKQMTLESFF) is disordered.

This sequence belongs to the activator 1 small subunits family. RfcL subfamily. Heteromultimer composed of small subunits (RfcS) and large subunits (RfcL).

Functionally, part of the RFC clamp loader complex which loads the PCNA sliding clamp onto DNA. This is Replication factor C large subunit from Methanococcus aeolicus (strain ATCC BAA-1280 / DSM 17508 / OCM 812 / Nankai-3).